The chain runs to 413 residues: Multifunctional CCA protein (413 aa).

ATP is bound by residues Gly8 and Arg11. Positions 8 and 11 each coordinate CTP. The Mg(2+) site is built by Asp21 and Asp23. Positions 91, 141, and 144 each coordinate ATP. Positions 91, 141, and 144 each coordinate CTP. The HD domain occupies 230 to 331 (TGAHLLLVLD…VRLLERCDAL (102 aa)).

It belongs to the tRNA nucleotidyltransferase/poly(A) polymerase family. Bacterial CCA-adding enzyme type 1 subfamily. Monomer. Can also form homodimers and oligomers. It depends on Mg(2+) as a cofactor. Ni(2+) is required as a cofactor.

It carries out the reaction a tRNA precursor + 2 CTP + ATP = a tRNA with a 3' CCA end + 3 diphosphate. The enzyme catalyses a tRNA with a 3' CCA end + 2 CTP + ATP = a tRNA with a 3' CCACCA end + 3 diphosphate. In terms of biological role, catalyzes the addition and repair of the essential 3'-terminal CCA sequence in tRNAs without using a nucleic acid template. Adds these three nucleotides in the order of C, C, and A to the tRNA nucleotide-73, using CTP and ATP as substrates and producing inorganic pyrophosphate. tRNA 3'-terminal CCA addition is required both for tRNA processing and repair. Also involved in tRNA surveillance by mediating tandem CCA addition to generate a CCACCA at the 3' terminus of unstable tRNAs. While stable tRNAs receive only 3'-terminal CCA, unstable tRNAs are marked with CCACCA and rapidly degraded. This chain is Multifunctional CCA protein, found in Verminephrobacter eiseniae (strain EF01-2).